Consider the following 157-residue polypeptide: MIITAIDTNIYDQPEFVEGRDVIGVRFEDLVLDKRIQRVALSGGEELGLRLNHGHPILREGDVLKADDKTVFVVEIIPTDVLVITPSDIHQMGFVAHSLGNRHLPAQFSKPGELTEKAAMIVQYDHTVVSFLDDHDIEYQRTELVPPIPFRHSGHTH.

It belongs to the UreE family.

It localises to the cytoplasm. Its function is as follows. Involved in urease metallocenter assembly. Binds nickel. Probably functions as a nickel donor during metallocenter assembly. This chain is Urease accessory protein UreE, found in Corynebacterium glutamicum (strain R).